The following is a 399-amino-acid chain: Stearoyl-[acyl-carrier-protein] 9-desaturase, seed specific, chloroplastic (399 aa).

A chloroplast-targeting transit peptide spans 1–34 (MALKFNPLVSQPYKLASSARPPVSTFRSPKFLCL). Fe cation is bound by residues Glu141, Glu179, His182, Glu232, Glu265, and His268.

It belongs to the fatty acid desaturase type 2 family. Homodimer. Fe(2+) serves as cofactor. As to expression, developing seeds.

Its subcellular location is the plastid. It is found in the chloroplast. It catalyses the reaction octadecanoyl-[ACP] + 2 reduced [2Fe-2S]-[ferredoxin] + O2 + 2 H(+) = (9Z)-octadecenoyl-[ACP] + 2 oxidized [2Fe-2S]-[ferredoxin] + 2 H2O. It participates in lipid metabolism; fatty acid metabolism. Converts stearoyl-ACP to oleoyl-ACP by introduction of a cis double bond between carbons Delta(9) and Delta(10) of the acyl chain. This is Stearoyl-[acyl-carrier-protein] 9-desaturase, seed specific, chloroplastic from Brassica napus (Rape).